A 249-amino-acid polypeptide reads, in one-letter code: tRNA (guanine-N(1)-)-methyltransferase (249 aa).

S-adenosyl-L-methionine contacts are provided by residues Gly-113 and 132–137 (VGDFVV).

This sequence belongs to the RNA methyltransferase TrmD family. As to quaternary structure, homodimer.

The protein localises to the cytoplasm. The catalysed reaction is guanosine(37) in tRNA + S-adenosyl-L-methionine = N(1)-methylguanosine(37) in tRNA + S-adenosyl-L-homocysteine + H(+). In terms of biological role, specifically methylates guanosine-37 in various tRNAs. This chain is tRNA (guanine-N(1)-)-methyltransferase, found in Desulforudis audaxviator (strain MP104C).